The primary structure comprises 668 residues: DNA ligase (668 aa).

NAD(+) contacts are provided by residues 37–41 (DAVYD), 86–87 (SM), and Glu-116. Lys-118 serves as the catalytic N6-AMP-lysine intermediate. Residues Arg-139, Glu-173, Lys-288, and Lys-312 each contribute to the NAD(+) site. Zn(2+) contacts are provided by Cys-406, Cys-409, Cys-424, and Cys-429. The BRCT domain maps to 590–668 (APDNFFKEKT…EQEAIAKIEK (79 aa)).

Belongs to the NAD-dependent DNA ligase family. LigA subfamily. The cofactor is Mg(2+). Mn(2+) serves as cofactor.

The catalysed reaction is NAD(+) + (deoxyribonucleotide)n-3'-hydroxyl + 5'-phospho-(deoxyribonucleotide)m = (deoxyribonucleotide)n+m + AMP + beta-nicotinamide D-nucleotide.. Functionally, DNA ligase that catalyzes the formation of phosphodiester linkages between 5'-phosphoryl and 3'-hydroxyl groups in double-stranded DNA using NAD as a coenzyme and as the energy source for the reaction. It is essential for DNA replication and repair of damaged DNA. This Lactobacillus johnsonii (strain CNCM I-12250 / La1 / NCC 533) protein is DNA ligase.